The following is a 590-amino-acid chain: Aspartate--tRNA(Asp/Asn) ligase (590 aa).

An L-aspartate-binding site is contributed by E175. Residues 199–202 (QQYK) form an aspartate region. Positions 221 and 450 each coordinate L-aspartate. 221 to 223 (RDE) serves as a coordination point for ATP. ATP is bound at residue E484. R491 lines the L-aspartate pocket. Position 536 to 539 (536 to 539 (GVDR)) interacts with ATP.

Belongs to the class-II aminoacyl-tRNA synthetase family. Type 1 subfamily. In terms of assembly, homodimer.

It is found in the cytoplasm. The enzyme catalyses tRNA(Asx) + L-aspartate + ATP = L-aspartyl-tRNA(Asx) + AMP + diphosphate. In terms of biological role, aspartyl-tRNA synthetase with relaxed tRNA specificity since it is able to aspartylate not only its cognate tRNA(Asp) but also tRNA(Asn). Reaction proceeds in two steps: L-aspartate is first activated by ATP to form Asp-AMP and then transferred to the acceptor end of tRNA(Asp/Asn). This Nitrobacter winogradskyi (strain ATCC 25391 / DSM 10237 / CIP 104748 / NCIMB 11846 / Nb-255) protein is Aspartate--tRNA(Asp/Asn) ligase.